The chain runs to 655 residues: MQIPETSSVHQNEWQRDVFVLSSGTCLPQQKAEVYRAHLAQIQYAWANSEISEASAVHLFKKYAEKYSAILDSDKLEIGLNNYADSILTMAKCQRNESDKWQSSLTTNNVLKLKSVQEMAEAGRRAQLSLLNSTDASVRVGNEIGTSGYSTVLAHNVLRNPSHAVPHAASSDCQIPEGSSNFLQNSKVSAFTKANTSSNTLINNSIPINTSLMQRNEVKAPTTFSTQSGPNVFSSTTSVYSGKRKACYALGDESTDIQPKPLVQRQLASKEATGDSDFKTAKEQLWVDQQKKHSNQPQRNPGPLYGGGKKSLGAARSRGLHGKFIPPLPRQEDVEDSNRKVYGQGNSEMNSTSDEHLKNIEPKMIELIMSEIMDHGPPLNWDDIAGLEFAKTTIKEIVVWPMLRPDIFTGLRGPPKGILLFGPPGTGKTLIGKCIACQSGATFFSISASSLTSKWVGEGEKMVRALFTVARCHQPAVIFIDEIDSLLSQRGEGEHESSRRIKTEFLVQLDGATTSSEDRILVVGATNRPQEIDEAARRRLVKRLYIPLPEASARKQIVVSLMSKEHCSLTEQEVEAIVLQADGFSGADMTQLCREAALGPIRSIQLMDISTITAEQVRPIAYIDFQSAFLVVRPSVSQKDLELYENWNKTFGCGR.

Residues 289–313 (QQKKHSNQPQRNPGPLYGGGKKSLG) form a disordered region. ATP-binding positions include Ala385 and 425-430 (GTGKTL).

The protein belongs to the AAA ATPase family. In terms of assembly, hexamer. Mg(2+) serves as cofactor.

It is found in the nucleus. Its subcellular location is the cytoplasm. The protein resides in the perinuclear region. It carries out the reaction ATP + H2O = ADP + phosphate + H(+). In terms of biological role, may be involved in DNA double-strand break (DBS) repair via homologous recombination (HR). May regulate osteoblast proliferation and differentiation. The polypeptide is Fidgetin-like protein 1 (fignl1) (Xenopus laevis (African clawed frog)).